The following is a 219-amino-acid chain: Ion-translocating oxidoreductase complex subunit G (219 aa).

Residues 25-45 (GLLLGLFSLVSALMLALASDA) form a helical membrane-spanning segment. Thr187 carries the post-translational modification FMN phosphoryl threonine.

It belongs to the RnfG family. The complex is composed of six subunits: RnfA, RnfB, RnfC, RnfD, RnfE and RnfG. FMN serves as cofactor.

The protein localises to the cellular chromatophore membrane. In terms of biological role, part of a membrane-bound complex that couples electron transfer with translocation of ions across the membrane. This is Ion-translocating oxidoreductase complex subunit G from Cereibacter sphaeroides (strain ATCC 17029 / ATH 2.4.9) (Rhodobacter sphaeroides).